Reading from the N-terminus, the 504-residue chain is Maturase K (504 aa).

It belongs to the intron maturase 2 family. MatK subfamily.

It localises to the plastid. The protein resides in the chloroplast. Usually encoded in the trnK tRNA gene intron. Probably assists in splicing its own and other chloroplast group II introns. The protein is Maturase K of Quercus suber (Cork oak).